The chain runs to 962 residues: Splicing regulator ARVCF (962 aa).

A coiled-coil region spans residues 8–46 (SAASILASVKEQEARFERLTRALEQERRHVALQLERAQQ). Residues 95–122 (TVEEDPGTPTSHVSIVTSEDGTTRRTET) are disordered. Phosphothreonine is present on residues threonine 102 and threonine 104. Over residues 102–114 (TPTSHVSIVTSED) the composition is skewed to polar residues. At arginine 170 the chain carries Omega-N-methylarginine. 2 disordered regions span residues 186–253 (GGGF…LPER) and 266–290 (RSLA…RRRP). The segment covering 206–217 (RGLGMRPPRAGP) has biased composition (low complexity). Serine 267 carries the phosphoserine modification. A compositionally biased stretch (acidic residues) spans 270 to 280 (ADDEGGPELEP). Residues serine 332, serine 335, serine 343, and serine 345 each carry the phosphoserine modification. 6 ARM repeats span residues 348–387 (SARK…HLCF), 390–429 (EGVK…NLSY), 433–467 (TDNK…VTGT), 468–508 (LWNL…NEDS), 526–565 (LRNV…DTDN), and 575–622 (MRNL…GKKA). A disordered region spans residues 590-614 (DRYQEAEPGPLGSAVGSQRRRRDDA). Phosphoserine is present on serine 606. The Nuclear localization signal motif lies at 607–623 (QRRRRDDASCFGGKKAK). Threonine 642 is subject to Phosphothreonine. ARM repeat units lie at residues 646-686 (PKRT…AAGA), 699-738 (TYIR…NLSL), 739-781 (DRRN…AVLN), and 782-826 (TIHE…SHVL). The segment at 776-962 (VVAVLNTIHE…AKPQPVDSWV (187 aa)) is required for interaction with RNA-binding proteins DDX5, HNRNPH2 and SRSF1 and with mRNAs. The interval 854 to 962 (ATAKGPKGAL…AKPQPVDSWV (109 aa)) is disordered. A phosphoserine mark is found at serine 864 and serine 871. At threonine 872 the chain carries Phosphothreonine. Residues 878–887 (KSLEGEKTGS) are compositionally biased toward basic and acidic residues. Phosphoserine is present on serine 915. Basic and acidic residues predominate over residues 920–932 (ASEKEPLKLDPSR).

This sequence belongs to the beta-catenin family. As to quaternary structure, component of a ribonucleoprotein complex containing mRNAs and RNA-binding proteins including DDX5, HNRNPH2 and SRSF1 as well as ARVCF. Interacts (via the extreme C-terminus) with FRMPD2 (via the PDZ 2 domain). Interacts with CCDC85B. As to expression, found in all the examined tissues including heart, brain, liver and kidney. Found at low level in lung. Expressed in dermal connective tissue, salivary gland duct and in the corneal layer (at protein level). Expressed in arrector pili muscle (at protein level). High levels detected in epithelial cells with lower levels found in fibroblasts and T lymphocytes.

The protein resides in the cell junction. Its subcellular location is the adherens junction. It is found in the nucleus. The protein localises to the cytoplasm. Functionally, contributes to the regulation of alternative splicing of pre-mRNAs. This Homo sapiens (Human) protein is Splicing regulator ARVCF.